Reading from the N-terminus, the 335-residue chain is Mycobacterial beta-ketoacyl-[acyl-carrier-protein] synthase III (335 aa).

Catalysis depends on residues cysteine 122 and histidine 258. The interval glutamine 259–arginine 263 is ACP-binding. Asparagine 289 is an active-site residue.

The protein belongs to the thiolase-like superfamily. FabH family. In terms of assembly, homodimer.

Its subcellular location is the cytoplasm. The enzyme catalyses malonyl-[ACP] + dodecanoyl-CoA + H(+) = 3-oxotetradecanoyl-[ACP] + CO2 + CoA. It functions in the pathway lipid metabolism; fatty acid biosynthesis. Its pathway is lipid metabolism; mycolic acid biosynthesis. Functionally, catalyzes the condensation reaction of fatty acid synthesis by the addition to an acyl acceptor of two carbons from malonyl-ACP. Catalyzes the first condensation reaction which initiates fatty acid synthesis and may therefore play a role in governing the total rate of fatty acid production. Possesses both acetoacetyl-ACP synthase and acetyl transacylase activities. Its substrate specificity determines the biosynthesis of branched-chain and/or straight-chain of fatty acids. In Mycolicibacterium paratuberculosis (strain ATCC BAA-968 / K-10) (Mycobacterium paratuberculosis), this protein is Mycobacterial beta-ketoacyl-[acyl-carrier-protein] synthase III.